Consider the following 156-residue polypeptide: Anaerobic ribonucleoside-triphosphate reductase-activating protein (156 aa).

[4Fe-4S] cluster-binding residues include cysteine 26, cysteine 30, and cysteine 33. S-adenosyl-L-methionine-binding positions include glycine 32–tyrosine 34 and glycine 72.

It belongs to the organic radical-activating enzymes family. As to quaternary structure, forms a tetramer composed of two NrdD and two NrdG subunits. Requires [4Fe-4S] cluster as cofactor.

The enzyme catalyses glycyl-[protein] + reduced [flavodoxin] + S-adenosyl-L-methionine = glycin-2-yl radical-[protein] + semiquinone [flavodoxin] + 5'-deoxyadenosine + L-methionine + H(+). In terms of biological role, activation of anaerobic ribonucleoside-triphosphate reductase under anaerobic conditions by generation of an organic free radical, using S-adenosylmethionine and reduced flavodoxin as cosubstrates to produce 5'-deoxy-adenosine. The protein is Anaerobic ribonucleoside-triphosphate reductase-activating protein (NRDG) of Escherichia coli (Bacteriophage T4).